A 208-amino-acid chain; its full sequence is MKLLPSVVLKLFLAAVLSALVTGESLERLRRGLAAATSNPDPPTGTTNQLLPTGADRAQEVQDLEGTDLDLFKVAFSSKPQALATPGKEKNGKKKRKGKGLGKKRDPCLKKYKDYCIHGECRYLKELRIPSCHCLPGYHGQRCHGLTLPVENPLYTYDHTTVLAVVAVVLSSVCLLVIVGLLMFRYHRRGGYDLESEEKVKLGMASSH.

A signal peptide spans 1 to 23 (MKLLPSVVLKLFLAAVLSALVTG). A propeptide spanning residues 24 to 62 (ESLERLRRGLAAATSNPDPPTGTTNQLLPTGADRAQEVQ) is cleaved from the precursor. Topologically, residues 24–160 (ESLERLRRGL…ENPLYTYDHT (137 aa)) are extracellular. Residues 82-103 (ALATPGKEKNGKKKRKGKGLGK) are disordered. An O-linked (GalNAc...) threonine glycan is attached at Thr-85. The segment covering 91–102 (NGKKKRKGKGLG) has biased composition (basic residues). In terms of domain architecture, EGF-like spans 104-144 (KRDPCLKKYKDYCIHGECRYLKELRIPSCHCLPGYHGQRCH). 3 cysteine pairs are disulfide-bonded: Cys-108–Cys-121, Cys-116–Cys-132, and Cys-134–Cys-143. Residues 149–208 (PVENPLYTYDHTTVLAVVAVVLSSVCLLVIVGLLMFRYHRRGGYDLESEEKVKLGMASSH) constitute a propeptide, C-terminal. Residues 161-184 (TVLAVVAVVLSSVCLLVIVGLLMF) traverse the membrane as a helical segment. Residues 185 to 208 (RYHRRGGYDLESEEKVKLGMASSH) lie on the Cytoplasmic side of the membrane.

In terms of assembly, interacts with FBLN1. Interacts with EGFR and ERBB4. Post-translationally, O-glycosylated. As to expression, most abundant in skeletal muscle, lung, spleen brain and heart.

The protein localises to the secreted. The protein resides in the extracellular space. It localises to the cell membrane. In terms of biological role, growth factor that mediates its effects via EGFR, ERBB2 and ERBB4. Required for normal cardiac valve formation and normal heart function. Promotes smooth muscle cell proliferation. May be involved in macrophage-mediated cellular proliferation. It is mitogenic for fibroblasts, but not endothelial cells. It is able to bind EGF receptor/EGFR with higher affinity than EGF itself and is a far more potent mitogen for smooth muscle cells than EGF. Also acts as a diphtheria toxin receptor. This Rattus norvegicus (Rat) protein is Proheparin-binding EGF-like growth factor (Hbegf).